The primary structure comprises 462 residues: Cytochrome P450 20A1 (462 aa).

The chain crosses the membrane as a helical span at residues 4–24; sequence FAIFAVTFLLALVGAVLYLYP. Residue Cys409 coordinates heme.

The protein belongs to the cytochrome P450 family. It depends on heme as a cofactor.

Its subcellular location is the membrane. The polypeptide is Cytochrome P450 20A1 (Cyp20a1) (Rattus norvegicus (Rat)).